A 317-amino-acid polypeptide reads, in one-letter code: Mitochondrial thiamine pyrophosphate carrier 1 (317 aa).

The next 6 helical transmembrane spans lie at 15 to 37 (TVSW…MATA), 80 to 100 (IPAT…YSWF), 118 to 138 (LTVG…LDLL), 168 to 190 (GFFT…MFLT), 205 to 227 (FWSR…TMVF), and 281 to 300 (GLTM…LFVY). Solcar repeat units lie at residues 16–103 (VSWY…FNNV), 112–197 (SQQG…VNIV), and 206–306 (WSRP…TMDL).

This sequence belongs to the mitochondrial carrier (TC 2.A.29) family.

Its subcellular location is the mitochondrion inner membrane. Mitochondrial transporter that mediates uptake of thiamine pyrophosphate (ThPP) into mitochondria. This chain is Mitochondrial thiamine pyrophosphate carrier 1 (TPC1), found in Kluyveromyces lactis (strain ATCC 8585 / CBS 2359 / DSM 70799 / NBRC 1267 / NRRL Y-1140 / WM37) (Yeast).